Reading from the N-terminus, the 124-residue chain is Modulator protein MzrA (124 aa).

The Cytoplasmic segment spans residues 1–7 (MINRRMK). The helical transmembrane segment at 8-28 (TGFVFHLLLLLLPLVVLVTSS) threads the bilayer. The Periplasmic segment spans residues 29–124 (RRTADDVTLH…KLSQQPFKLG (96 aa)).

The protein belongs to the MzrA family. Interacts with EnvZ.

It localises to the cell inner membrane. Its function is as follows. Modulates the activity of the EnvZ/OmpR two-component regulatory system, probably by directly modulating EnvZ enzymatic activity and increasing stability of phosphorylated OmpR. In Musicola paradisiaca (strain Ech703) (Dickeya paradisiaca), this protein is Modulator protein MzrA.